A 579-amino-acid polypeptide reads, in one-letter code: MGQAEFNARTDASAEISAFAVRAEPDSEPVSEKQGTAETDAETGAGGTEVPAERNGEDDVERTPKKSLSFKLAFIGLAASMFVFQVDATALGIALPTIAADLKGESLESFWANLSYTLCGLVMQPVWASISTAFGRKPPLYVSMALFFIGSIVFAVAQNMNTIIVGRVLQGFGGGGIDVLAEVILADMTTLEERSKYLGLMAIPMAIGNIMGPSVGALFATYASWRWIGWVNLPLLGIGTPLVFFFLKLRPVPLDASLAKNLNRLDWIGMVLVVVGITIFVLPLSWAGSLFPWGAWQTLVPLFLGVAVLVIFAFYEARPDAPIVPHRLFHSKTGNMTLVGGFLHGAVLVSLLQYLPLIYQAVQLETAILSAVSLLPTVIISVVVAAISMMLVPWFGGYVWILRLAWVILTLGTGLLALFDVGSSSSMRLGLPILWGAGVALLRLNLLPMQASVKNVDDTGLAIGQFLTIRMFGGLVGLTISATIFNSVFSTSISATAVHLTGPLAPLKDVANAVAFIDKLRSIDVPVETRDQVLRVYLKCFQTIFYTMTGLSGLGLVTSLFVDEIDLKSQGLGNQRFEE.

Positions 17-62 are disordered; sequence SAFAVRAEPDSEPVSEKQGTAETDAETGAGGTEVPAERNGEDDVER. The span at 51 to 62 shows a compositional bias: basic and acidic residues; sequence PAERNGEDDVER. Transmembrane regions (helical) follow at residues 73–93, 110–130, 138–158, 168–188, 200–220, 227–247, 267–287, and 294–314; these read AFIGLAASMFVFQVDATALGI, FWANLSYTLCGLVMQPVWASI, PPLYVSMALFFIGSIVFAVAQ, VLQGFGGGGIDVLAEVILADM, LMAIPMAIGNIMGPSVGALFA, WIGWVNLPLLGIGTPLVFFFL, WIGMVLVVVGITIFVLPLSWA, and GAWQTLVPLFLGVAVLVIFAF. Asn-335 carries an N-linked (GlcNAc...) asparagine glycan. Helical transmembrane passes span 338–358, 367–391, 398–419, 429–449, 460–480, and 541–561; these read LVGGFLHGAVLVSLLQYLPLI, AILSAVSLLPTVIISVVVAAISMML, YVWILRLAWVILTLGTGLLALF, LGLPILWGAGVALLRLNLLPM, GLAIGQFLTIRMFGGLVGLTI, and FQTIFYTMTGLSGLGLVTSLF.

It belongs to the major facilitator superfamily.

The protein localises to the membrane. Functionally, MFS-type transporter; part of the gene cluster that mediates the biosynthesis of sphingofungins, bioactive molecules acting as sphingolipid inhibitors via inhibiting serine palmitoyl transferase (SPT). This chain is MFS-type transporter sphD, found in Aspergillus fumigatus (strain CBS 144.89 / FGSC A1163 / CEA10) (Neosartorya fumigata).